We begin with the raw amino-acid sequence, 473 residues long: Photosystem II CP43 reaction center protein (473 aa).

Positions 1-14 are excised as a propeptide; sequence MKTLYSLRRFYPVE. Thr15 is subject to N-acetylthreonine. The residue at position 15 (Thr15) is a Phosphothreonine. 5 helical membrane-spanning segments follow: residues 69-93, 134-155, 178-200, 255-275, and 291-312; these read LFEV…PHLA, LLGP…KDRN, KALY…RKIT, KPFA…LSYS, and WFNN…ASQA. Glu367 provides a ligand contact to [CaMn4O5] cluster. Residues 447-471 traverse the membrane as a helical segment; the sequence is RARAAAAGFEKGIDRDFEPVLSMTP.

The protein belongs to the PsbB/PsbC family. PsbC subfamily. As to quaternary structure, PSII is composed of 1 copy each of membrane proteins PsbA, PsbB, PsbC, PsbD, PsbE, PsbF, PsbH, PsbI, PsbJ, PsbK, PsbL, PsbM, PsbT, PsbX, PsbY, PsbZ, Psb30/Ycf12, at least 3 peripheral proteins of the oxygen-evolving complex and a large number of cofactors. It forms dimeric complexes. It depends on Binds multiple chlorophylls and provides some of the ligands for the Ca-4Mn-5O cluster of the oxygen-evolving complex. It may also provide a ligand for a Cl- that is required for oxygen evolution. PSII binds additional chlorophylls, carotenoids and specific lipids. as a cofactor.

It localises to the plastid. Its subcellular location is the chloroplast thylakoid membrane. Functionally, one of the components of the core complex of photosystem II (PSII). It binds chlorophyll and helps catalyze the primary light-induced photochemical processes of PSII. PSII is a light-driven water:plastoquinone oxidoreductase, using light energy to abstract electrons from H(2)O, generating O(2) and a proton gradient subsequently used for ATP formation. The sequence is that of Photosystem II CP43 reaction center protein from Piper cenocladum (Ant piper).